The primary structure comprises 234 residues: Segregation and condensation protein A (234 aa).

Belongs to the ScpA family. Component of a cohesin-like complex composed of ScpA, ScpB and the Smc homodimer, in which ScpA and ScpB bind to the head domain of Smc. The presence of the three proteins is required for the association of the complex with DNA.

Its subcellular location is the cytoplasm. Participates in chromosomal partition during cell division. May act via the formation of a condensin-like complex containing Smc and ScpB that pull DNA away from mid-cell into both cell halves. The protein is Segregation and condensation protein A of Streptococcus pyogenes serotype M3 (strain ATCC BAA-595 / MGAS315).